A 350-amino-acid chain; its full sequence is Guanine nucleotide-binding protein G(t) subunit alpha-1 (350 aa).

The disordered stretch occupies residues 1–21 (MGAGASAEEKHSRELEKKLKE). A lipid anchor (N-myristoyl glycine) is attached at G2. Residues 7–21 (AEEKHSRELEKKLKE) are compositionally biased toward basic and acidic residues. The region spanning 28–350 (RTVKLLLLGA…KENLKDCGLF (323 aa)) is the G-alpha domain. Residues 31–44 (KLLLLGAGESGKST) form a G1 motif region. 36 to 43 (GAGESGKS) lines the GTP pocket. Residue S43 participates in Mg(2+) binding. A Phosphotyrosine modification is found at Y142. Residues D146, 171–177 (LRSRVKT), G199, 265–268 (NKKD), and A322 each bind GTP. Positions 169-177 (DVLRSRVKT) are G2 motif. Residue T177 coordinates Mg(2+). Positions 192–201 (FRMFDVGGQR) are G3 motif. A G4 motif region spans residues 261-268 (VLFLNKKD). The tract at residues 320–325 (TCATDT) is G5 motif. Positions 340–350 (IKENLKDCGLF) are interaction with RHO.

Heterotrimeric G proteins are composed of 3 subunits alpha, beta and gamma. The alpha chain contains the guanine nucleotide binding site. Interacts with RHO. Interacts with RGS9 and PDE6G. Interacts (when myristoylated) with UNC119; interaction is required for localization in sensory neurons. As to expression, rod.

Its subcellular location is the cell projection. It localises to the cilium. The protein localises to the photoreceptor outer segment. The protein resides in the membrane. It is found in the photoreceptor inner segment. In terms of biological role, functions as a signal transducer for the rod photoreceptor RHO. Required for normal RHO-mediated light perception by the retina. Guanine nucleotide-binding proteins (G proteins) function as transducers downstream of G protein-coupled receptors (GPCRs), such as the photoreceptor RHO. The alpha chain contains the guanine nucleotide binding site and alternates between an active, GTP-bound state and an inactive, GDP-bound state. Activated RHO promotes GDP release and GTP binding. Signaling is mediated via downstream effector proteins, such as cGMP-phosphodiesterase. The polypeptide is Guanine nucleotide-binding protein G(t) subunit alpha-1 (GNAT1) (Bos taurus (Bovine)).